Here is a 276-residue protein sequence, read N- to C-terminus: Aquaporin-1 (276 aa).

The Cytoplasmic portion of the chain corresponds to 1 to 10 (MLDAEQKKNY). The helical transmembrane segment at 11–31 (VAGAFGEFVGTAYFLFMGVGG) threads the bilayer. Topologically, residues 32-46 (AVNFLNNAAGSPLPG) are extracellular. The chain crosses the membrane as a helical span at residues 47–67 (FAIPFCFGFSLFVNVFIWAPI). Residues 68–93 (SGGVFNPSITIALMATNPKDFPWYRG) are Cytoplasmic-facing. The NPA 1 signature appears at 73 to 75 (NPS). The helical transmembrane segment at 94–114 (ILYIVSQFLGALFGSWLIDLI) threads the bilayer. At 115 to 133 (QPEAPNAATLLADGVSVAQ) the chain is on the extracellular side. Residues 134-154 (GLFMEMFATSVLTMAVLILAG) form a helical membrane-spanning segment. The Cytoplasmic segment spans residues 155-159 (ERYGK). The chain crosses the membrane as a helical span at residues 160–180 (YLAPFGIGMSLFISALCAGPY). The Extracellular segment spans residues 181 to 204 (TGASLNPARTLGPAIVANQYGRAH). Residues 186–188 (NPA) carry the NPA 2 motif. A helical membrane pass occupies residues 205–225 (WIYYVGPTLGSLLAAGYWHIL). The Cytoplasmic segment spans residues 226 to 276 (RILNIDVVDLKNVLNKCKKCGKEDPRISLKHCEECLKDDPKPEKYDIESQN).

The protein belongs to the MIP/aquaporin (TC 1.A.8) family.

The protein resides in the cell membrane. The catalysed reaction is H2O(in) = H2O(out). With respect to regulation, polyethylene glycol (PEG) stimulates whereas glycerol inhibits the aquaporin activity. In terms of biological role, water channel required to facilitate the transport of water across membranes. Stimulates plant drought tolerance by facilitating the transport of water from the arbuscular mycorrhiza fungus to host plants. This Rhizophagus irregularis (Arbuscular mycorrhizal fungus) protein is Aquaporin-1.